A 215-amino-acid chain; its full sequence is Eukaryotic translation initiation factor 4E-1 (215 aa).

Residues 1–35 (MAEDTETRPASAGAEEREEGEIADDGDGSAAAAAG) form a disordered region. A compositionally biased stretch (acidic residues) spans 16–27 (EREEGEIADDGD). EIF4G-binding stretches follow at residues 40 to 43 (HPLE) and 50 to 86 (FDNP…NNIH). Residues 58 to 63 (RAVAWG), K90, and 108 to 109 (WE) contribute to the mRNA site. C113 and C151 are oxidised to a cystine. Residues 134–143 (HTLLALIGEQ) form an EIF4G-binding region. MRNA contacts are provided by residues 158 to 163 (RKNQER) and 203 to 207 (KRSDK).

It belongs to the eukaryotic initiation factor 4E family. As to quaternary structure, EIF4F is a multi-subunit complex, the composition of which varies with external and internal environmental conditions. It is composed of at least EIF4A, EIF4E and EIF4G. EIF4E is also known to interact with other partners. In higher plants two isoforms of EIF4F have been identified, named isoform EIF4F and isoform EIF(iso)4F. Isoform EIF4F has subunits p220 and p26, whereas isoform EIF(iso)4F has subunits p82 and p28. (Microbial infection) Interacts with potyvirus viral genome-linked protein (VPg); this interaction is possible in susceptible hosts but impaired in resistant plants. Post-translationally, according to the redox status, the Cys-113-Cys-151 disulfide bridge may have a role in regulating protein function by affecting its ability to bind capped mRNA.

It is found in the nucleus. The protein resides in the cytoplasm. Its function is as follows. Component of the protein complex eIF4F, which is involved in the recognition of the mRNA cap, ATP-dependent unwinding of 5'-terminal secondary structure and recruitment of mRNA to the ribosome. Recognizes and binds the 7-methylguanosine-containing mRNA cap during an early step in the initiation of protein synthesis and facilitates ribosome binding by inducing the unwinding of the mRNAs secondary structures. Key component of recessive resistance to potyviruses and bymoviruses, including barley yellow mosaic virus and barley mild mosaic virus. In terms of biological role, (Microbial infection) Susceptibility host factor required for viral infection by recruiting viral RNAs to the host ribosomal complex via an interaction with viral genome-linked protein (VPg). The sequence is that of Eukaryotic translation initiation factor 4E-1 from Hordeum vulgare subsp. vulgare (Domesticated barley).